The following is a 35-amino-acid chain: Conotoxin Cal6.1g (35 aa).

Residues 1-8 (GLSRPSKR) constitute a propeptide that is removed on maturation. Disulfide bonds link Cys-9/Cys-25, Cys-16/Cys-29, and Cys-24/Cys-34.

This sequence belongs to the conotoxin O1 superfamily. In terms of tissue distribution, expressed by the venom duct.

It localises to the secreted. Probable neurotoxin with unknown target. Possibly targets ion channels. In Californiconus californicus (California cone), this protein is Conotoxin Cal6.1g.